A 219-amino-acid chain; its full sequence is uncharacterized protein (219 aa).

This is an uncharacterized protein from Treponema pallidum (strain Nichols).